A 483-amino-acid chain; its full sequence is Shaker-related potassium channel tsha2 (483 aa).

Residues 1-165 (MTVVSCEIQD…YPESSGPARM (165 aa)) lie on the Cytoplasmic side of the membrane. Residues 166–186 (IAVVSVSVIVISIVIFCLETL) form a helical membrane-spanning segment. Topologically, residues 187–220 (PQFREDTSANLPLSNHHTTNGTTLHKKPNLFTDP) are extracellular. The chain crosses the membrane as a helical span at residues 221 to 241 (FFMVETLCIVWFSFEFLVRFL). Over 242–252 (SCPSKPAFFKN) the chain is Cytoplasmic. A lipid anchor (S-palmitoyl cysteine) is attached at cysteine 243. The helical transmembrane segment at 253–273 (AMNSIDILAIAPYFITLGLEL) threads the bilayer. Over 274–324 (AEQQEAGSEQAMSLAILRVIRLVRVFRIFKLSRHSKGLQILGQTLHASISE) the chain is Extracellular. A helical; Voltage-sensor transmembrane segment spans residues 325 to 345 (LGLLIFFLLIGVILFSSAVYF). Residues 346-353 (AEADDPES) lie on the Cytoplasmic side of the membrane. A helical membrane pass occupies residues 354–374 (GFSSIPAAFWWAVVSMTTVGY). Residues 371–376 (TVGYGD) carry the Selectivity filter motif. At 375–385 (GDMCPVTIGGK) the chain is on the extracellular side. A helical transmembrane segment spans residues 386–406 (IVGSMCAIAGVLTIALPVPVI). Over 407–483 (VSNFNYFYHR…EHYTGKLTDV (77 aa)) the chain is Cytoplasmic. The residue at position 426 (tyrosine 426) is a Phosphotyrosine. The residue at position 430 (threonine 430) is a Phosphothreonine. Residues 440-452 (EFKSTSDSRQSLT) show a composition bias toward polar residues. The disordered stretch occupies residues 440–459 (EFKSTSDSRQSLTKSEDTEE). A PDZ-binding motif is present at residues 481-483 (TDV).

It belongs to the potassium channel family. A (Shaker) (TC 1.A.1.2) subfamily. Heterotetramer of potassium channel proteins. Binds PDZ domains of dlg1, dlg2 and dlg4. In terms of tissue distribution, expressed in oligodendrocytes and astrocytes.

Its subcellular location is the membrane. Functionally, mediates the voltage-dependent potassium ion permeability of excitable membranes. Assuming opened or closed conformations in response to the voltage difference across the membrane, the protein forms a potassium-selective channel through which potassium ions may pass in accordance with their electrochemical gradient. This Oncorhynchus mykiss (Rainbow trout) protein is Shaker-related potassium channel tsha2.